The chain runs to 276 residues: Ice-binding protein (276 aa).

Residues 1–24 form the signal peptide; sequence MKILKRIPVLAVLLVGLMTNCSND. The short motif at 79–82 is the Ice-binding site motif (T-A/G-X-T/N) 1 element; the sequence is TGIT. A disulfide bridge links Cys-107 with Cys-124. 2 consecutive short sequence motifs (ice-binding site motif (T-A/G-X-T/N)) follow at residues 245-248 and 263-266; these read TGIN and TAVT.

It belongs to the ice-binding protein family. Monomer.

Its subcellular location is the secreted. In terms of biological role, has antifreeze activity for survival in a subzero environment. Binds to the surface of ice crystals and inhibits their growth. Has high thermal hysteresis (TH) activity, which is the ability to lower the freezing point of an aqueous solution below its melting point, and thus the freezing of the cell fluid can be prevented protecting the organism from ice damage. The TH activity of this protein is 2.2 degrees Celsius at 5 uM and 2.5 degrees Celsius at 50 uM. The chain is Ice-binding protein from Flavobacterium frigoris (strain PS1).